Reading from the N-terminus, the 488-residue chain is Probable multidrug resistance protein NorM (488 aa).

The next 12 helical transmembrane spans lie at 11–31 (AILRLAGPLIAAQLAYVAMVF), 55–75 (YAFVSTFCVGVVAAVGNLVAI), 97–117 (AALALAAGLLLWNLRPLLLVF), 127–147 (AMQFLHSLTFALPGYMAFMVL), 159–179 (PVMAISVLGALANLALNYSFI), 190–210 (LAGIGLVTALVMNCMPLLLAL), 247–267 (GTYAVESGMFTVATLCMGIIG), 271–291 (LAAHQIAIQAVYVAFMVPVGL), 317–337 (VGIGFGALCMLLFAGLFWWMP), 355–375 (VAAMAVSLLAIAAWFELFDGT), 393–413 (FLVGLACYWLVGVPLACLLAF), and 421–441 (GVWWGLAGGLACAAIGLTLAF).

Belongs to the multi antimicrobial extrusion (MATE) (TC 2.A.66.1) family.

The protein resides in the cell inner membrane. Its function is as follows. Multidrug efflux pump. The sequence is that of Probable multidrug resistance protein NorM (norM) from Pseudomonas aeruginosa (strain ATCC 15692 / DSM 22644 / CIP 104116 / JCM 14847 / LMG 12228 / 1C / PRS 101 / PAO1).